The following is a 446-amino-acid chain: Na(+)-translocating NADH-quinone reductase subunit A (446 aa).

Belongs to the NqrA family. In terms of assembly, composed of six subunits; NqrA, NqrB, NqrC, NqrD, NqrE and NqrF.

The enzyme catalyses a ubiquinone + n Na(+)(in) + NADH + H(+) = a ubiquinol + n Na(+)(out) + NAD(+). With respect to regulation, this reaction is tightly coupled to the Na(+) pumping activity and specifically requires Na(+) for activity. Inhibited by korormicin and 2-N-heptyl-4-hydroxyquinoline N-oxide (HQNO). In terms of biological role, NQR complex catalyzes the reduction of ubiquinone-1 to ubiquinol by two successive reactions, coupled with the transport of Na(+) ions from the cytoplasm to the periplasm. NqrA to NqrE are probably involved in the second step, the conversion of ubisemiquinone to ubiquinol. The chain is Na(+)-translocating NADH-quinone reductase subunit A from Vibrio alginolyticus.